Consider the following 357-residue polypeptide: DNA integrity scanning protein DisA (357 aa).

In terms of domain architecture, DAC spans 9–147 (DRKLLEILKT…DDIKYILRDS (139 aa)). Residues Gly76, Leu94, and 107–111 (TRHRT) each bind ATP.

It belongs to the DisA family. As to quaternary structure, homooctamer. Mg(2+) is required as a cofactor.

It catalyses the reaction 2 ATP = 3',3'-c-di-AMP + 2 diphosphate. Its function is as follows. Participates in a DNA-damage check-point that is active prior to asymmetric division when DNA is damaged. DisA forms globular foci that rapidly scan along the chromosomes during sporulation, searching for lesions. When a lesion is present, DisA pauses at the lesion site. This triggers a cellular response that culminates in a temporary block in sporulation initiation. In terms of biological role, also has diadenylate cyclase activity, catalyzing the condensation of 2 ATP molecules into cyclic di-AMP (c-di-AMP). c-di-AMP acts as a signaling molecule that couples DNA integrity with progression of sporulation. The rise in c-di-AMP level generated by DisA while scanning the chromosome, operates as a positive signal that advances sporulation; upon encountering a lesion, the DisA focus arrests at the damaged site and halts c-di-AMP synthesis. In Clostridium acetobutylicum (strain ATCC 824 / DSM 792 / JCM 1419 / IAM 19013 / LMG 5710 / NBRC 13948 / NRRL B-527 / VKM B-1787 / 2291 / W), this protein is DNA integrity scanning protein DisA.